Reading from the N-terminus, the 677-residue chain is UvrABC system protein B (677 aa).

The region spanning Glu24–Arg412 is the Helicase ATP-binding domain. An ATP-binding site is contributed by Gly37–Thr44. The Beta-hairpin motif lies at Tyr90–Ile113. One can recognise a Helicase C-terminal domain in the interval Gln429–Arg591. Positions Glu635–Leu670 constitute a UVR domain.

Belongs to the UvrB family. Forms a heterotetramer with UvrA during the search for lesions. Interacts with UvrC in an incision complex.

It is found in the cytoplasm. Functionally, the UvrABC repair system catalyzes the recognition and processing of DNA lesions. A damage recognition complex composed of 2 UvrA and 2 UvrB subunits scans DNA for abnormalities. Upon binding of the UvrA(2)B(2) complex to a putative damaged site, the DNA wraps around one UvrB monomer. DNA wrap is dependent on ATP binding by UvrB and probably causes local melting of the DNA helix, facilitating insertion of UvrB beta-hairpin between the DNA strands. Then UvrB probes one DNA strand for the presence of a lesion. If a lesion is found the UvrA subunits dissociate and the UvrB-DNA preincision complex is formed. This complex is subsequently bound by UvrC and the second UvrB is released. If no lesion is found, the DNA wraps around the other UvrB subunit that will check the other stand for damage. The sequence is that of UvrABC system protein B from Bacteroides fragilis (strain ATCC 25285 / DSM 2151 / CCUG 4856 / JCM 11019 / LMG 10263 / NCTC 9343 / Onslow / VPI 2553 / EN-2).